The chain runs to 591 residues: Uncoordinated protein 58 (591 aa).

The tract at residues 1-24 is disordered; it reads MFFYSPNVAPQPSSTSHRRPTLTH. A helical membrane pass occupies residues 184–204; sequence VILVSVLIGYLCLGAWILMLL. Residue Asn226 is glycosylated (N-linked (GlcNAc...) asparagine). A run of 5 helical transmembrane segments spans residues 289–309, 318–338, 400–420, 428–448, and 453–473; these read TFPT…YGEV, VFSV…AADI, PIGA…AMFI, FIHA…GDIV, and IFLS…TMCV.

This sequence belongs to the two pore domain potassium channel (TC 1.A.1.8) family.

Its subcellular location is the membrane. Functionally, has a role in mobility, possibly in the transport of potassium in muscles. This is Uncoordinated protein 58 from Caenorhabditis elegans.